We begin with the raw amino-acid sequence, 283 residues long: Formamidopyrimidine-DNA glycosylase (283 aa).

The Schiff-base intermediate with DNA role is filled by proline 2. The active-site Proton donor is glutamate 3. The active-site Proton donor; for beta-elimination activity is the lysine 60. DNA contacts are provided by histidine 95, arginine 114, and arginine 159. An FPG-type zinc finger spans residues 244–278 (WVYGRHNQPCRVCGTPIERIKLGGRSSHFCPQCQP). The active-site Proton donor; for delta-elimination activity is arginine 268.

The protein belongs to the FPG family. As to quaternary structure, monomer. The cofactor is Zn(2+).

The enzyme catalyses Hydrolysis of DNA containing ring-opened 7-methylguanine residues, releasing 2,6-diamino-4-hydroxy-5-(N-methyl)formamidopyrimidine.. The catalysed reaction is 2'-deoxyribonucleotide-(2'-deoxyribose 5'-phosphate)-2'-deoxyribonucleotide-DNA = a 3'-end 2'-deoxyribonucleotide-(2,3-dehydro-2,3-deoxyribose 5'-phosphate)-DNA + a 5'-end 5'-phospho-2'-deoxyribonucleoside-DNA + H(+). In terms of biological role, involved in base excision repair of DNA damaged by oxidation or by mutagenic agents. Acts as a DNA glycosylase that recognizes and removes damaged bases. Has a preference for oxidized purines, such as 7,8-dihydro-8-oxoguanine (8-oxoG). Has AP (apurinic/apyrimidinic) lyase activity and introduces nicks in the DNA strand. Cleaves the DNA backbone by beta-delta elimination to generate a single-strand break at the site of the removed base with both 3'- and 5'-phosphates. This Crocosphaera subtropica (strain ATCC 51142 / BH68) (Cyanothece sp. (strain ATCC 51142)) protein is Formamidopyrimidine-DNA glycosylase.